A 122-amino-acid chain; its full sequence is Large ribosomal subunit protein bL17 (122 aa).

The protein belongs to the bacterial ribosomal protein bL17 family. In terms of assembly, part of the 50S ribosomal subunit. Contacts protein L32.

The chain is Large ribosomal subunit protein bL17 from Staphylococcus epidermidis (strain ATCC 35984 / DSM 28319 / BCRC 17069 / CCUG 31568 / BM 3577 / RP62A).